We begin with the raw amino-acid sequence, 507 residues long: MEEFQGYLELDRSWQDDFLYPLILQESIYALVHNQDLGFNRSILLSKKKGYDTKYSLLVVKRLVIRMYQQNFVILSLNHSNKNAFFVPNKNLYSQRISEVFAVIAEIPVSMRVMSSLKGKERKQYKNLQSIHSIFPFLENKFSRLNHVLDILIPHPVHPKILVQTIRYCVKDISCLHLLQLLLYEYCNNGITLKGSVSNFSKKKNQRFLLFLYNSYVCECESIFVFLRNRSSHLRSTSYGAFLARVYFYLKLEHFLKVFTKHCRVILQFFKDPFIHYIRYQGKWILASRGTFLLMTKFKYYFVNFWQCHFYLWLQTRRIYINKSLNQPIDFIGFRLSVRLNPSVVRSQMLENAFLIYNGIKKFETLVPTMSLIGSLAKEKFCNVLGHPISKPAWADLSDSDIIRRFGRMCRNLSHYYSGSSKKGGLYRIKYILRLSCARTLARKHKSTVRAFMKRLGSEFFEEFFFKEEKVISLILSRDSSISRRLYRGPIWYFDIFCIHDLASHND.

Belongs to the intron maturase 2 family. MatK subfamily.

It is found in the plastid. The protein resides in the chloroplast. Its function is as follows. Usually encoded in the trnK tRNA gene intron. Probably assists in splicing its own and other chloroplast group II introns. In Fagopyrum esculentum (Common buckwheat), this protein is Maturase K.